The sequence spans 197 residues: Fucoxanthin-chlorophyll a-c binding protein C, chloroplastic (197 aa).

The transit peptide at 1-31 (MKTAVIASLIAGAAAFAPAKNAARTSVATNM) directs the protein to the chloroplast. A run of 3 helical transmembrane segments spans residues 73-94 (ISMLAVVGYLVQEAGVRLPGTI), 113-133 (IPAGGLVQLLFFIGVLESSVM), and 174-196 (GRAAQMGILAFMVHEQLGVSLLP).

Belongs to the fucoxanthin chlorophyll protein family. As to quaternary structure, the LHC complex of chromophytic algae is composed of fucoxanthin, chlorophyll A and C bound non-covalently by fucoxanthin chlorophyll proteins (FCPs). The ratio of the pigments in LHC; fucoxanthin: chlorophyll C: chlorophyll A; (0.6-1): (0.1-0.3): (1).

The protein resides in the plastid. Its subcellular location is the chloroplast thylakoid membrane. In terms of biological role, the light-harvesting complex (LHC) functions as a light receptor, it captures and delivers excitation energy to photosystems with which it is closely associated. Energy is transferred from the carotenoid and chlorophyll C (or B) to chlorophyll A and the photosynthetic reaction centers where it is used to synthesize ATP and reducing power. This chain is Fucoxanthin-chlorophyll a-c binding protein C, chloroplastic (FCPC), found in Phaeodactylum tricornutum (Diatom).